A 393-amino-acid polypeptide reads, in one-letter code: Dual specificity mitogen-activated protein kinase kinase 1 (393 aa).

The interval 1 to 27 (MPKKKPTPIQLNPAPDGSAVNGTSSAE) is disordered. In terms of domain architecture, Protein kinase spans 68-361 (FEKISELGAG…LKQLMVHAFI (294 aa)). ATP-binding positions include 74–82 (LGAGNGGVV), Lys97, 143–146 (MEHM), and 150–153 (SLDQ). Residue Lys97 coordinates U0126. 144-146 (EHM) is a binding site for K-252a. Residue Asp190 is the Proton acceptor of the active site. Residues 192–195 (KPSN) and Asp208 contribute to the ATP site. Ser194 serves as a coordination point for K-252a. 208 to 211 (DFGV) lines the U0126 pocket. 2 positions are modified to phosphoserine; by BRAF and RAF1: Ser218 and Ser222. The tract at residues 270–307 (ELELMFGCQVEGDAAETPPRPRTPGRPLSSYGMDSRPP) is RAF1-binding. Thr286 is subject to Phosphothreonine. A Phosphothreonine; by MAPK1 modification is found at Thr292. Ser298 bears the Phosphoserine; by PAK mark.

This sequence belongs to the protein kinase superfamily. STE Ser/Thr protein kinase family. MAP kinase kinase subfamily. As to quaternary structure, found in a complex with at least BRAF, HRAS, MAP2K1, MAPK3/ERK1 and RGS14. Forms a heterodimer with MAP2K2/MEK2. Forms heterodimers with KSR2 which further dimerize to form tetramers. Interacts with KSR1 or KSR2 and BRAF; the interaction with KSR1 or KSR2 mediates KSR1-BRAF or KSR2-BRAF dimerization. Interacts with ARBB2, LAMTOR3 and RAF1. Interacts with MAPK1/ERK2. Interacts with MORG1. Interacts with PPARG. Interacts with isoform 1 of VRK2. Interacts with SGK1. Interacts with BIRC6/bruce. Interacts with KAT7; the interaction promotes KAT7 phosphorylation. Interacts with RAF1 and NEK10; the interaction is required for ERK1/2-signaling pathway activation in response to UV irradiation. Interacts with TRAF3IP3. Interacts with MOS. In terms of assembly, (Microbial infection) Interacts with Yersinia YopJ. Phosphorylation at Ser-218 and Ser-222 by MAP kinase kinase kinases (BRAF or MEKK1) positively regulates kinase activity. Also phosphorylated at Thr-292 by MAPK1/ERK2 and at Ser-298 by PAK. MAPK1/ERK2 phosphorylation of Thr-292 occurs in response to cellular adhesion and leads to inhibition of Ser-298 phosphorylation by PAK. Autophosphorylated at Ser-218 and Ser-222, autophosphosphorylation is promoted by NEK10 following UV irradiation. In terms of processing, (Microbial infection) Acetylation by Yersinia YopJ prevents phosphorylation and activation, thus blocking the MAPK signaling pathway. As to expression, widely expressed, with extremely low levels in brain.

Its subcellular location is the cytoplasm. The protein resides in the cytoskeleton. It localises to the microtubule organizing center. The protein localises to the centrosome. It is found in the spindle pole body. Its subcellular location is the nucleus. The protein resides in the membrane. The catalysed reaction is L-seryl-[protein] + ATP = O-phospho-L-seryl-[protein] + ADP + H(+). It catalyses the reaction L-threonyl-[protein] + ATP = O-phospho-L-threonyl-[protein] + ADP + H(+). It carries out the reaction L-tyrosyl-[protein] + ATP = O-phospho-L-tyrosyl-[protein] + ADP + H(+). Ras proteins such as HRAS mediate the activation of RAF proteins such as RAF1 or BRAF which in turn activate extracellular signal-regulated kinases (ERK) through MAPK (mitogen-activated protein kinases) and ERK kinases MAP2K1/MEK1 and MAP2K2/MEK2. Activation occurs through phosphorylation of Ser-218 and Ser-222. MAP2K1/MEK1 binds KSR1 or KSR2 releasing the inhibitory intramolecular interaction between KSR1 or KSR2 protein kinase and N-terminal domains. This allows KSR1 or KSR2 dimerization with BRAF leading to BRAF activation and phosphorylation of MAP2K1. MAP2K1/MEK1 is also the target of negative feed-back regulation by its substrate kinases, such as MAPK1/ERK2. These phosphorylate MAP2K1/MEK1 on Thr-292, thereby facilitating dephosphorylation of the activating residues Ser-218 and Ser-222. Inhibited by serine/threonine phosphatase 2A. Many inhibitors have been identified including pyrrole derivatives, TAK-733 (one of a series of 8-methylpyrido[2,3-d]pyrimidine-4,7(3H,8H)-dione derivatives), CH4987655 and RDEA119/BAY 869766. In terms of biological role, dual specificity protein kinase which acts as an essential component of the MAP kinase signal transduction pathway. Binding of extracellular ligands such as growth factors, cytokines and hormones to their cell-surface receptors activates RAS and this initiates RAF1 activation. RAF1 then further activates the dual-specificity protein kinases MAP2K1/MEK1 and MAP2K2/MEK2. Both MAP2K1/MEK1 and MAP2K2/MEK2 function specifically in the MAPK/ERK cascade, and catalyze the concomitant phosphorylation of a threonine and a tyrosine residue in a Thr-Glu-Tyr sequence located in the extracellular signal-regulated kinases MAPK3/ERK1 and MAPK1/ERK2, leading to their activation and further transduction of the signal within the MAPK/ERK cascade. Activates BRAF in a KSR1 or KSR2-dependent manner; by binding to KSR1 or KSR2 releases the inhibitory intramolecular interaction between KSR1 or KSR2 protein kinase and N-terminal domains which promotes KSR1 or KSR2-BRAF dimerization and BRAF activation. Depending on the cellular context, this pathway mediates diverse biological functions such as cell growth, adhesion, survival and differentiation, predominantly through the regulation of transcription, metabolism and cytoskeletal rearrangements. One target of the MAPK/ERK cascade is peroxisome proliferator-activated receptor gamma (PPARG), a nuclear receptor that promotes differentiation and apoptosis. MAP2K1/MEK1 has been shown to export PPARG from the nucleus. The MAPK/ERK cascade is also involved in the regulation of endosomal dynamics, including lysosome processing and endosome cycling through the perinuclear recycling compartment (PNRC), as well as in the fragmentation of the Golgi apparatus during mitosis. In Homo sapiens (Human), this protein is Dual specificity mitogen-activated protein kinase kinase 1.